A 347-amino-acid chain; its full sequence is 4-hydroxy-2-oxovalerate aldolase 1 (347 aa).

One can recognise a Pyruvate carboxyltransferase domain in the interval 11–263; sequence VVLHDMCLRD…ETGVDLFKLM (253 aa). 19–20 lines the substrate pocket; sequence RD. Aspartate 20 lines the Mn(2+) pocket. Residue histidine 23 is the Proton acceptor of the active site. Substrate is bound by residues serine 173 and histidine 202. Mn(2+)-binding residues include histidine 202 and histidine 204. Residue tyrosine 293 participates in substrate binding.

The protein belongs to the 4-hydroxy-2-oxovalerate aldolase family.

It carries out the reaction (S)-4-hydroxy-2-oxopentanoate = acetaldehyde + pyruvate. This Azoarcus sp. (strain BH72) protein is 4-hydroxy-2-oxovalerate aldolase 1 (lapG).